A 274-amino-acid chain; its full sequence is Carbonic anhydrase (274 aa).

Zn(2+)-binding residues include Cys39, His98, and Cys101. The disordered stretch occupies residues 214–274; that stretch reads EDEYAPHPNS…QAERIYRGSR (61 aa). Basic and acidic residues-rich tracts occupy residues 234 to 245 and 261 to 274; these read PGKERPGREKAT and LPREQAERIYRGSR.

Belongs to the beta-class carbonic anhydrase family. In terms of assembly, a hexamer formed by a trimer of dimers. Interacts with the first 260 residues of CcmM; both the N-terminal 206 residues and the C-terminal tail contribute to CcmM binding. Interacts with full-length and the N-terminal 249 residues of CcmM. A probable CcmM-CcaA-CcmN complex as well as a CcaA-RuBisCO-CcmM complex can also be isolated. Zn(2+) serves as cofactor.

Its subcellular location is the carboxysome. It catalyses the reaction hydrogencarbonate + H(+) = CO2 + H2O. Inhibited by ethoxyzolamide. In terms of biological role, reversible hydration of carbon dioxide. Essential to photosynthetic carbon dioxide fixation, supplies CO(2) to RuBisCO (ribulose bisphosphate carboxylase, rbcL-rbcS) in the carboxysome. This chain is Carbonic anhydrase, found in Synechocystis sp. (strain ATCC 27184 / PCC 6803 / Kazusa).